Reading from the N-terminus, the 309-residue chain is Ribosomal RNA small subunit methyltransferase H (309 aa).

S-adenosyl-L-methionine is bound by residues 33–35, Asp53, Phe79, Asp100, and Gln107; that span reads GGH.

This sequence belongs to the methyltransferase superfamily. RsmH family.

Its subcellular location is the cytoplasm. The catalysed reaction is cytidine(1402) in 16S rRNA + S-adenosyl-L-methionine = N(4)-methylcytidine(1402) in 16S rRNA + S-adenosyl-L-homocysteine + H(+). Specifically methylates the N4 position of cytidine in position 1402 (C1402) of 16S rRNA. This is Ribosomal RNA small subunit methyltransferase H from Clostridium botulinum (strain Loch Maree / Type A3).